A 502-amino-acid polypeptide reads, in one-letter code: UPF0371 protein CLH_2534 (502 aa).

It belongs to the UPF0371 family.

This Clostridium botulinum (strain Alaska E43 / Type E3) protein is UPF0371 protein CLH_2534.